Reading from the N-terminus, the 485-residue chain is uncharacterized protein (485 aa).

13 consecutive transmembrane segments (helical) span residues tryptophan 13–serine 33, proline 38–alanine 58, alanine 79–serine 99, leucine 111–tyrosine 131, valine 160–valine 180, leucine 211–threonine 231, isoleucine 234–alanine 254, isoleucine 297–phenylalanine 317, tryptophan 321–alanine 341, isoleucine 365–alanine 385, phenylalanine 388–leucine 408, phenylalanine 420–isoleucine 440, and leucine 445–isoleucine 465.

Belongs to the polysaccharide synthase family.

It is found in the cell membrane. This is an uncharacterized protein from Klebsiella pneumoniae.